We begin with the raw amino-acid sequence, 357 residues long: MAVDPRCLLSLCSTISKASSAKGTNDFVKIGMELWQTAQPYLVQALGLQPPPPKVDVDAAVANAGDAHGEQPWVATPLPGQTVRALFIGINYYGTSAALSGCCNDVKQMLATLQKKGLPINEAVILVDEDNFPGRTDQPTRDNIVRYMAWLVKDAKPGDVLFFHYSGHGTQCKSRGDSDEKYDQCIAPVDFQKSGCIVDDDIHKLLFSRLPEKVRLTAVFDCCHSGSIMDLPFTYVCSGGEQASGTPHMKRIREGNDVLGDVMMISGCADEQTSADVKNTATFGTGSTGAGGAATQCITCMLMNNQSLSYGKLLIETRDMLKRKRFKQVPQLSASKAIDLDQTFSLTEMFSVDRSVQ.

The active site involves histidine 168. Aspartate 183, aspartate 199, and aspartate 200 together coordinate Ca(2+). The active site involves cysteine 223. Position 230 (aspartate 230) interacts with Ca(2+).

The protein belongs to the peptidase C14B family.

It localises to the recycling endosome. Its activity is regulated as follows. Activated by Ca(2+). Its function is as follows. Cysteine protease that cleaves specifically after arginine or lysine residues. In the bloodstream form, may cleave inactive metacaspase-4 MCA4 prior to MCA4 secretion. This is Metacaspase-3 from Trypanosoma brucei brucei.